Reading from the N-terminus, the 475-residue chain is UDP-N-acetylmuramate--L-alanine ligase (475 aa).

112–118 (GTHGKTT) provides a ligand contact to ATP.

Belongs to the MurCDEF family.

The protein resides in the cytoplasm. The catalysed reaction is UDP-N-acetyl-alpha-D-muramate + L-alanine + ATP = UDP-N-acetyl-alpha-D-muramoyl-L-alanine + ADP + phosphate + H(+). It participates in cell wall biogenesis; peptidoglycan biosynthesis. Cell wall formation. This is UDP-N-acetylmuramate--L-alanine ligase from Paracidovorax citrulli (strain AAC00-1) (Acidovorax citrulli).